A 790-amino-acid chain; its full sequence is MQPNPDLVRAIANRYAANLRLCLPLRRTSLQLARAVHGNIITFGFQPRAHILNRLIDVYCKSSELNYARQLFDEISEPDKIARTTMVSGYCASGDITLARGVFEKAPVCMRDTVMYNAMITGFSHNNDGYSAINLFCKMKHEGFKPDNFTFASVLAGLALVADDEKQCVQFHAAALKSGAGYITSVSNALVSVYSKCASSPSLLHSARKVFDEILEKDERSWTTMMTGYVKNGYFDLGEELLEGMDDNMKLVAYNAMISGYVNRGFYQEALEMVRRMVSSGIELDEFTYPSVIRACATAGLLQLGKQVHAYVLRREDFSFHFDNSLVSLYYKCGKFDEARAIFEKMPAKDLVSWNALLSGYVSSGHIGEAKLIFKEMKEKNILSWMIMISGLAENGFGEEGLKLFSCMKREGFEPCDYAFSGAIKSCAVLGAYCNGQQYHAQLLKIGFDSSLSAGNALITMYAKCGVVEEARQVFRTMPCLDSVSWNALIAALGQHGHGAEAVDVYEEMLKKGIRPDRITLLTVLTACSHAGLVDQGRKYFDSMETVYRIPPGADHYARLIDLLCRSGKFSDAESVIESLPFKPTAEIWEALLSGCRVHGNMELGIIAADKLFGLIPEHDGTYMLLSNMHAATGQWEEVARVRKLMRDRGVKKEVACSWIEMETQVHTFLVDDTSHPEAEAVYIYLQDLGKEMRRLGYVPDTSFVLHDVESDGHKEDMLTTHSEKIAVAFGLMKLPPGTTIRIFKNLRTCGDCHNFFRFLSWVVQRDIILRDRKRFHHFRNGECSCGNFW.

16 PPR repeats span residues 48–82, 84–109, 112–146, 147–182, 183–217, 218–248, 250–284, 285–315, 319–349, 350–384, 385–415, 416–450, 451–481, 482–516, 517–551, and 553–583; these read RAHI…DKIA, TTMV…APVC, DTVM…GFKP, DNFT…GAGY, ITSV…ILEK, DERS…MDDN, KLVA…GIEL, DEFT…VLRR, SFHF…MPAK, DLVS…NILS, WMIM…GFEP, CDYA…GFDS, SLSA…MPCL, DSVS…GIRP, DRIT…YRIP, and GADH…LPFK. Residues 588–663 are type E motif; sequence IWEALLSGCR…EVACSWIEME (76 aa). The type E(+) motif stretch occupies residues 664-694; sequence TQVHTFLVDDTSHPEAEAVYIYLQDLGKEMR. Residues 695 to 790 form a type DYW motif region; that stretch reads RLGYVPDTSF…NGECSCGNFW (96 aa).

This sequence belongs to the PPR family. PCMP-H subfamily.

This chain is Pentatricopeptide repeat-containing protein At1g25360 (PCMP-H74), found in Arabidopsis thaliana (Mouse-ear cress).